Here is a 261-residue protein sequence, read N- to C-terminus: Ribonuclease 3 (261 aa).

The 125-residue stretch at 20–144 (YFALYRMLGF…FIGAIYLDKG (125 aa)) folds into the RNase III domain. E62 serves as a coordination point for Mg(2+). D66 is a catalytic residue. 2 residues coordinate Mg(2+): N130 and E133. E133 is an active-site residue. Residues 172-241 (NFKSKLFEWC…SQMTWRKIRT (70 aa)) enclose the DRBM domain.

The protein belongs to the ribonuclease III family. As to quaternary structure, homodimer. Requires Mg(2+) as cofactor.

Its subcellular location is the cytoplasm. It carries out the reaction Endonucleolytic cleavage to 5'-phosphomonoester.. Digests double-stranded RNA. Involved in the processing of primary rRNA transcript to yield the immediate precursors to the large and small rRNAs (23S and 16S). Processes some mRNAs, and tRNAs when they are encoded in the rRNA operon. Processes pre-crRNA and tracrRNA of type II CRISPR loci if present in the organism. This Azobacteroides pseudotrichonymphae genomovar. CFP2 protein is Ribonuclease 3.